A 762-amino-acid polypeptide reads, in one-letter code: Probable disease resistance protein At1g61300 (762 aa).

G2 carries N-myristoyl glycine lipidation. Residues C3 and C4 are each lipidated (S-palmitoyl cysteine). Positions 26–329 constitute an NB-ARC domain; that stretch reads NINRNSFGVE…CEGFIGEDQV (304 aa). An ATP-binding site is contributed by 68 to 75; the sequence is GMGGVGKT. LRR repeat units lie at residues 401 to 422, 423 to 444, 447 to 470, 471 to 493, and 494 to 516; these read AVRR…SKCS, ELTT…FIRY, KLVV…SGLV, SLQF…KKLK, and KLTF…SRLL.

It belongs to the disease resistance NB-LRR family.

The protein localises to the cell membrane. Its function is as follows. Probable disease resistance protein. The chain is Probable disease resistance protein At1g61300 from Arabidopsis thaliana (Mouse-ear cress).